Here is a 489-residue protein sequence, read N- to C-terminus: ATP-dependent zinc metalloprotease FtsH 3 (489 aa).

Over 1–14 (MNPRPVRPGGSLQQ) the chain is Cytoplasmic. The helical transmembrane segment at 15 to 31 (SLLALGSLSVAVGLAVW) threads the bilayer. Residues 32 to 489 (QQRTLGRGRS…GPRPARPAMN (458 aa)) lie on the Extracellular side of the membrane. Residue 95 to 102 (GPPGTGKT) participates in ATP binding. Histidine 315 contributes to the Zn(2+) binding site. The active site involves glutamate 316. The Zn(2+) site is built by histidine 319 and aspartate 391.

In the central section; belongs to the AAA ATPase family. This sequence in the C-terminal section; belongs to the peptidase M41 family. In terms of assembly, homohexamer. Zn(2+) is required as a cofactor.

Its subcellular location is the cell membrane. Acts as a processive, ATP-dependent zinc metallopeptidase for both cytoplasmic and membrane proteins. Plays a role in the quality control of integral membrane proteins. The protein is ATP-dependent zinc metalloprotease FtsH 3 of Sphaerobacter thermophilus (strain ATCC 49802 / DSM 20745 / KCCM 41009 / NCIMB 13125 / S 6022).